The primary structure comprises 529 residues: Ribonuclease Y (529 aa).

The chain crosses the membrane as a helical span at residues 4-24 (GLIYISLEVLVACLITALVMY). The 82-residue stretch at 216 to 297 (LTTRIALPCS…NRIEEVYHRV (82 aa)) folds into the KH domain. The 94-residue stretch at 342–435 (ALQHSKEVAL…VCAADALSAG (94 aa)) folds into the HD domain.

The protein belongs to the RNase Y family.

The protein resides in the cell membrane. Endoribonuclease that initiates mRNA decay. This chain is Ribonuclease Y, found in Helicobacter pylori (strain ATCC 700392 / 26695) (Campylobacter pylori).